Consider the following 848-residue polypeptide: Heat shock protein 70 homolog lhs1 (848 aa).

A signal peptide spans 1–21; the sequence is MKRSVLTIILFFSCQFWHAFA. N-linked (GlcNAc...) asparagine glycans are attached at residues Asn134, Asn247, Asn359, Asn457, Asn462, Asn488, Asn555, Asn632, Asn678, Asn733, and Asn817. Positions 784–848 are disordered; sequence KLKAKKGASS…QQEIDDSDEL (65 aa). Composition is skewed to polar residues over residues 807 to 822 and 829 to 840; these read TNDI…TSTQ and ASVTQRPSSLQQ. The Prevents secretion from ER signature appears at 845-848; that stretch reads SDEL.

Belongs to the heat shock protein 70 family.

The protein resides in the endoplasmic reticulum lumen. The enzyme catalyses ATP + H2O = ADP + phosphate + H(+). Its function is as follows. Chaperone required for protein translocation and folding in the endoplasmic reticulum. The polypeptide is Heat shock protein 70 homolog lhs1 (Schizosaccharomyces pombe (strain 972 / ATCC 24843) (Fission yeast)).